The following is a 294-amino-acid chain: Putative deoxyribonuclease TATDN3 (294 aa).

H9, H11, E104, H144, H167, and D215 together coordinate Zn(2+).

The protein belongs to the metallo-dependent hydrolases superfamily. TatD-type hydrolase family. The cofactor is Mn(2+). It depends on Ca(2+) as a cofactor. Mg(2+) serves as cofactor. Zn(2+) is required as a cofactor.

The protein resides in the nucleus. Its activity is regulated as follows. The 3'-exonuclease activity is sensitive to the metal ion present in the active site, whereas the AP endodeoxyribonuclease activity is observed in a variety of divalent metal cofactors. 3'-exoxonuclease activity is suppressed in the presence of Ca(2+), Zn(2+) and Ni(2+). Exhibits 3'-exonuclease activities and apurinic/apyrimidinic (AP) endonuclease (in vitro). Show preferential AP endonuclease activity on double-stranded DNA substrates and 3'- exonuclease activity on single-stranded DNA. This Mus musculus (Mouse) protein is Putative deoxyribonuclease TATDN3 (Tatdn3).